A 113-amino-acid chain; its full sequence is Beta-microseminoprotein (113 aa).

Positions 1 to 20 (MEAWLGSLLFLATMVIASKA) are cleaved as a signal peptide. Intrachain disulfides connect Cys22–Cys69, Cys38–Cys61, Cys56–Cys92, Cys59–Cys68, and Cys83–Cys106.

This sequence belongs to the beta-microseminoprotein family. In terms of assembly, homodimer; Interacts with PI16.

The protein resides in the secreted. The chain is Beta-microseminoprotein (Msmb) from Mus musculus (Mouse).